The primary structure comprises 2824 residues: Highly reducing polyketide synthase stpks1 (2824 aa).

Residues 8-428 form the Ketosynthase family 3 (KS3) domain; that stretch reads PKPVAVVGIS…GANGHVIAES (421 aa). Active-site for beta-ketoacyl synthase activity residues include Cys-177, His-312, and His-348. The tract at residues 517 to 854 is malonyl-CoA:ACP transacylase (MAT) domain; sequence QLVFVFSGQG…LTAVGNLSTL (338 aa). Catalysis depends on Ser-616, which acts as the For malonyltransferase activity. The interval 886 to 1004 is N-terminal hotdog fold; it reads MPFYSESSEL…GFMTTEVMDK (119 aa). In terms of domain architecture, PKS/mFAS DH spans 886–1168; the sequence is MPFYSESSEL…SKHWTGAVPT (283 aa). A dehydratase (DH) domain region spans residues 894-1083; that stretch reads ELAVKMKRSR…PSLLDSCIHG (190 aa). The active-site Proton acceptor; for dehydratase activity is the His-925. The segment at 1018–1168 is C-terminal hotdog fold; that stretch reads TTPADISNLY…SKHWTGAVPT (151 aa). Asp-1078 serves as the catalytic Proton donor; for dehydratase activity. The interval 1101 to 1449 is methyltransferase (CMet) domain; the sequence is PSHIGRVTLY…KFQVVDGAQD (349 aa). The segment at 1213 to 1232 is disordered; that stretch reads APPSANGHANGHANGSANGS. An enoyl reductase (ER) domain region spans residues 1518 to 1840; the sequence is TGTFDGAVAT…LPSDFSVSQS (323 aa). Residues 1842-2096 are ketoreductase (KR) domain; sequence ALADDKTYLV…SESVLYNHLV (255 aa). Positions 2109 to 2196 constitute a Carrier domain; the sequence is DPYEVLQEIV…TAVSTAEKPF (88 aa). Residues 2200–2414 are thioesterase (TE) domain; the sequence is AMHQPGQTIL…WASSDATTRM (215 aa). The methyltransferase (CMet) domain stretch occupies residues 2608-2809; that stretch reads YRQNKVFTSM…ATGYSNVQVC (202 aa).

The protein operates within mycotoxin biosynthesis. Highly reducing polyketide synthase; part of the gene cluster that mediates the biosynthesis of strobilurin A, an antifungal polyketide that contains a key beta-methoxyacrylate toxophore that targets the complex III of the mitochondrial electron transport chain. Strobilurin biosynthesis begins with construction of benzoyl CoA by step-wise elimination of ammonia from phenylalanine by the phenylalanine ammonia-lyase str11, oxygenation by str8 and retro-Claisen reaction to form benzoic acid, which is activated to its CoA thiolester benzoyl CoA by the dedicated CoA ligase str10. Benzoyl CoA forms the starter unit for the highly reducing polyketide synthase stpks1 that produces the polyketide prestrobilutin A. The FAD-dependent oxygenase str9 then catalyzes the key oxidative rearrangement responsible for the creation of the beta-methoxyacrylate toxophore. Str9 performs epoxidation of the 2,3 olefin of prestrobilutin A, followed by Meinwald rearrangement to furnish the aldehyde intermediate. Rapid enolization of the aldehyde intermediate would give the beta-methoxyacrylate skeleton and methylations catalyzed by str2 and str3 complete the synthesis and lead to the production of strobilurin A. The short-chain dehydrogenase stl2 and the dehydrogenase str4 play a role in the shunt pathway leading to the production of bolineol. The cluster encodes no obvious halogenase gene that could be involved in production of strobilurin B, nor any obvious dimethylallyl-transferase that could be involved in the production of strobilurin G. It is possible that unknown proteins encoded in, or near, the cluster (such as str1 or stl1) may form new classes of halogenases or dimethylally-transferases, or that the responsible genes are located elsewhere on the genome. Similarly, proteins encoded by str5/str6 hydrolases appear to have no chemical role in the biosynthesis of strobilurin A. Finally, no obvious self-resistance gene is found within the cluster. The sequence is that of Highly reducing polyketide synthase stpks1 from Strobilurus tenacellus.